The following is a 1048-amino-acid chain: Probable inactive receptor kinase At5g10020 (1048 aa).

The N-terminal stretch at 1–21 (MSHFLTFCFLSLLLLLHGANA) is a signal peptide. LRR repeat units follow at residues 100-120 (RLRN…PSLG), 124-146 (SLQH…ISEL), 148-169 (SLNH…GFRN), 172-194 (QLRS…FTEL), 196-217 (NVEF…PMEN), 224-246 (TLRH…ESIG), 250-272 (NLEI…GSQP), 273-294 (SLRI…ELLQ), 298-319 (PLLE…INSS), 320-342 (TLTM…FKSC), 365-387 (TPDV…TSAF), 389-411 (RLSV…WGDS), 412-433 (QFSV…SFFT), 436-457 (SLRS…RGSR), 469-491 (QMEL…IGTM), 493-516 (KIKV…NKLS), 517-539 (GLLF…LPSQ), and 540-560 (MVGF…DLRS). A helical transmembrane segment spans residues 602–622 (IAIIVASVGAAIMILFVLFAY). The disordered stretch occupies residues 696-733 (EQGAPATSAPTNLLDDYPAASGRKSSSGGSPLSSSPRF). Positions 716-733 (SGRKSSSGGSPLSSSPRF) are enriched in low complexity. Ser744 carries the phosphoserine modification. In terms of domain architecture, Protein kinase spans 768–1045 (RAPAEVLGRS…IRQVLDHLTS (278 aa)). Residues 774–782 (LGRSSHGTL) and Lys796 each bind ATP.

The protein belongs to the protein kinase superfamily.

The protein localises to the membrane. The protein is Probable inactive receptor kinase At5g10020 of Arabidopsis thaliana (Mouse-ear cress).